Consider the following 479-residue polypeptide: MEKRLRLAPSPTGLFHIGTARTALFNWLYAQKIGGKFLLRIEDTDFVRSKSEYTKNILEGLKWLGLKWDDEILKQSDRISIHKSYIKKLLECGAAYRCFTTENEISELREEQKNKGLPPKHDNRHRSLSKEEIDSFISQGKTSVIRFKIDEKIEIKWVDLIRGEIKWQGKDLGGDLVLSRRAKGYEIGDPLYNLAVVVDDNFMNITHVVRGEDHISNTAKQILIYEALNFKLPTFSHTPLILNNEGKKLSKRDCVTSIDEFRDMGYLPEALSNYMAFLGWSPKSTDREILSLNEISEIFDLSDINKAGAKFSWEKLNWINSQYIKNMESIKLSEIIRKYWDDNGWVAPSQEWAHKLAILIRDSMILLKDAIDQSKPFFLIPKIKKEGQDFLENNDSKASLRLILNYLIEQNAIKLNKEKAKEIINEISKMHNVKKGILMKSLRVAFFGSLSGPDLIQSWELFSESKTDISRIERCFKSI.

The short motif at 9–19 (PSPTGLFHIGT) is the 'HIGH' region element. The short motif at 248 to 252 (KLSKR) is the 'KMSKS' region element. Residue lysine 251 participates in ATP binding.

The protein belongs to the class-I aminoacyl-tRNA synthetase family. Glutamate--tRNA ligase type 1 subfamily. As to quaternary structure, monomer.

Its subcellular location is the cytoplasm. It carries out the reaction tRNA(Glu) + L-glutamate + ATP = L-glutamyl-tRNA(Glu) + AMP + diphosphate. In terms of biological role, catalyzes the attachment of glutamate to tRNA(Glu) in a two-step reaction: glutamate is first activated by ATP to form Glu-AMP and then transferred to the acceptor end of tRNA(Glu). The chain is Glutamate--tRNA ligase from Prochlorococcus marinus (strain MIT 9215).